A 649-amino-acid chain; its full sequence is Cysteine-rich receptor-like protein kinase 2 (649 aa).

The N-terminal stretch at 1-29 (MKKEPVHILPLYLPCLLMFLLSSLRQITG) is a signal peptide. At 30-258 (DARARAVKVT…IPRNGRSRGS (229 aa)) the chain is on the extracellular side. Gnk2-homologous domains are found at residues 33–134 (ARAV…NYSF) and 139–245 (KGPE…DQDF). Asparagine 47, asparagine 131, asparagine 149, asparagine 154, and asparagine 214 each carry an N-linked (GlcNAc...) asparagine glycan. The chain crosses the membrane as a helical span at residues 259 to 279 (VVVIVVSVLSSVVVFMIGVAV). The Cytoplasmic segment spans residues 280 to 649 (SVYICKRRTI…TVSQSSFYGR (370 aa)). Residues 325 to 608 (FDNANKLGQG…HMLKNKEEVL (284 aa)) enclose the Protein kinase domain. ATP is bound by residues 331 to 339 (LGQGGFGTV) and lysine 353. Tyrosine 398 carries the post-translational modification Phosphotyrosine. Residue aspartate 450 is the Proton acceptor of the active site. A phosphoserine mark is found at serine 454 and serine 483. Phosphothreonine is present on residues threonine 484 and threonine 489. Tyrosine 497 carries the post-translational modification Phosphotyrosine.

It belongs to the protein kinase superfamily. Ser/Thr protein kinase family. CRK subfamily.

It localises to the membrane. The enzyme catalyses L-seryl-[protein] + ATP = O-phospho-L-seryl-[protein] + ADP + H(+). The catalysed reaction is L-threonyl-[protein] + ATP = O-phospho-L-threonyl-[protein] + ADP + H(+). This is Cysteine-rich receptor-like protein kinase 2 (CRK2) from Arabidopsis thaliana (Mouse-ear cress).